Here is an 80-residue protein sequence, read N- to C-terminus: Protein UL148B (80 aa).

Residues 10–30 traverse the membrane as a helical segment; it reads AICVGLVMGVTVIASCALLVF.

It is found in the host membrane. The protein is Protein UL148B (UL148B) of Homo sapiens (Human).